A 710-amino-acid chain; its full sequence is DNA topoisomerase 1 (710 aa).

Residues 1–22 (MPTSTKSKTKTTTKKKTTRKRV) form a disordered region. Residues 7–22 (SKTKTTTKKKTTRKRV) are compositionally biased toward basic residues. Residues 26 to 136 (KNLVIVESPA…EKNRVVFNEI (111 aa)) enclose the Toprim domain. Residues glutamate 32 and aspartate 105 each coordinate Mg(2+). Residues 152–574 (DVDLVDAQQA…QFYKPFAKEL (423 aa)) enclose the Topo IA-type catalytic domain. The interaction with DNA stretch occupies residues 186–191 (SAGRVQ). Tyrosine 321 serves as the catalytic O-(5'-phospho-DNA)-tyrosine intermediate. 2 consecutive C4-type zinc fingers follow at residues 595 to 621 (CDVC…FPDC) and 635 to 663 (CPLC…YPDC). The C4-type 3; atypical zinc finger occupies 676 to 702 (CPKSGHFLVEKKVRGGGKQVVCSNDEC).

The protein belongs to the type IA topoisomerase family. Monomer. Requires Mg(2+) as cofactor.

It carries out the reaction ATP-independent breakage of single-stranded DNA, followed by passage and rejoining.. Releases the supercoiling and torsional tension of DNA, which is introduced during the DNA replication and transcription, by transiently cleaving and rejoining one strand of the DNA duplex. Introduces a single-strand break via transesterification at a target site in duplex DNA. The scissile phosphodiester is attacked by the catalytic tyrosine of the enzyme, resulting in the formation of a DNA-(5'-phosphotyrosyl)-enzyme intermediate and the expulsion of a 3'-OH DNA strand. The free DNA strand then undergoes passage around the unbroken strand, thus removing DNA supercoils. Finally, in the religation step, the DNA 3'-OH attacks the covalent intermediate to expel the active-site tyrosine and restore the DNA phosphodiester backbone. In Lactococcus lactis subsp. lactis (strain IL1403) (Streptococcus lactis), this protein is DNA topoisomerase 1.